The following is a 143-amino-acid chain: Transcriptional regulator MraZ (143 aa).

SpoVT-AbrB domains follow at residues 5 to 47 (QYEH…SLEE) and 76 to 119 (AVEC…SKEV).

It belongs to the MraZ family. Forms oligomers.

The protein resides in the cytoplasm. It localises to the nucleoid. The sequence is that of Transcriptional regulator MraZ from Thermoanaerobacter sp. (strain X514).